A 208-amino-acid chain; its full sequence is Large ribosomal subunit protein bL25 (208 aa).

The tract at residues 163–208 is disordered; that stretch reads DYSYNHEPDEVVASILPPQKQEETEAESAAQDVEEPEKGTEEEKEE. Residues 198–208 are compositionally biased toward basic and acidic residues; sequence PEKGTEEEKEE.

The protein belongs to the bacterial ribosomal protein bL25 family. CTC subfamily. Part of the 50S ribosomal subunit; part of the 5S rRNA/L5/L18/L25 subcomplex. Contacts the 5S rRNA. Binds to the 5S rRNA independently of L5 and L18.

In terms of biological role, this is one of the proteins that binds to the 5S RNA in the ribosome where it forms part of the central protuberance. The polypeptide is Large ribosomal subunit protein bL25 (Bacillus licheniformis (strain ATCC 14580 / DSM 13 / JCM 2505 / CCUG 7422 / NBRC 12200 / NCIMB 9375 / NCTC 10341 / NRRL NRS-1264 / Gibson 46)).